The primary structure comprises 94 residues: Large ribosomal subunit protein bL25 (94 aa).

It belongs to the bacterial ribosomal protein bL25 family. As to quaternary structure, part of the 50S ribosomal subunit; part of the 5S rRNA/L5/L18/L25 subcomplex. Contacts the 5S rRNA. Binds to the 5S rRNA independently of L5 and L18.

Functionally, this is one of the proteins that binds to the 5S RNA in the ribosome where it forms part of the central protuberance. This chain is Large ribosomal subunit protein bL25, found in Erwinia tasmaniensis (strain DSM 17950 / CFBP 7177 / CIP 109463 / NCPPB 4357 / Et1/99).